Reading from the N-terminus, the 415-residue chain is Serine hydroxymethyltransferase 2 (415 aa).

(6S)-5,6,7,8-tetrahydrofolate-binding positions include L121 and 125–127 (GHL). K229 carries the post-translational modification N6-(pyridoxal phosphate)lysine.

Belongs to the SHMT family. Homodimer. Pyridoxal 5'-phosphate serves as cofactor.

Its subcellular location is the cytoplasm. The catalysed reaction is (6R)-5,10-methylene-5,6,7,8-tetrahydrofolate + glycine + H2O = (6S)-5,6,7,8-tetrahydrofolate + L-serine. It functions in the pathway one-carbon metabolism; tetrahydrofolate interconversion. The protein operates within amino-acid biosynthesis; glycine biosynthesis; glycine from L-serine: step 1/1. Catalyzes the reversible interconversion of serine and glycine with tetrahydrofolate (THF) serving as the one-carbon carrier. This reaction serves as the major source of one-carbon groups required for the biosynthesis of purines, thymidylate, methionine, and other important biomolecules. Also exhibits THF-independent aldolase activity toward beta-hydroxyamino acids, producing glycine and aldehydes, via a retro-aldol mechanism. The chain is Serine hydroxymethyltransferase 2 from Bordetella parapertussis (strain 12822 / ATCC BAA-587 / NCTC 13253).